We begin with the raw amino-acid sequence, 394 residues long: GDNF family receptor alpha-like (394 aa).

Residues 1 to 19 form the signal peptide; it reads MLVFIFLAVRLSSENESSS. Residues 20–350 lie on the Extracellular side of the membrane; that stretch reads QTNDCAYFMR…LTGFNSPFSG (331 aa). 3 N-linked (GlcNAc...) asparagine glycosylation sites follow: N65, N101, and N115. 11 disulfides stabilise this stretch: C132–C190, C139–C145, C156–C168, C163–C211, C192–C199, C221–C292, C228–C234, C245–C276, C253–C259, C270–C317, and C294–C305. The tract at residues 150–229 is required for interaction with GDF15; sequence ALYLKACTAN…TCLSVIHTCR (80 aa). A helical membrane pass occupies residues 351–371; it reads ELIYVVVCMVVTSGILSLVML. Residues 372–394 are Cytoplasmic-facing; that stretch reads KLRIPSKKRDPAPIEIAGAVIIQ.

This sequence belongs to the GDNFR family. In terms of assembly, interacts (via the extracellular domain) with GDF15 and RET; receptor of GDF15, mediates cellular signaling through interaction with RET after GDF15-binding. Interaction with RET requires previous GDF15-binding. Cleaved and inactivated by MMP14, inhibiting the GDF15-GFRAL aversive response. As to expression, expressed in the brainstem, restricted to cells in the area postrema and the immediately adjacent region of the nucleus tractus solitarius. Detected at low levels in testis.

It localises to the cell membrane. In terms of biological role, brainstem-restricted receptor for GDF15 hormone, which triggers an aversive response, characterized by nausea, vomiting, and/or loss of appetite in response to various stresses. The aversive response is both required to reduce continuing exposure to those stresses at the time of exposure and to promote avoidance behavior in the future. The GDF15-GFRAL aversive response is triggered by stresses, such as anticancer drugs (camptothecin or cisplatin), cancers or drugs such as metformin. Upon interaction with its ligand, GDF15, mediates the GDF15-induced autophosphorylation and activation of the RET tyrosine kinase receptor, leading to activation of MAPK- and AKT- signaling pathways. Ligand-binding activates GFRAL-expressing neurons localized in the area postrema and nucleus tractus solitarius of the brainstem. The GDF15-GFRAL signal induces expression of genes involved in metabolism, such as lipid metabolism in adipose tissues. This chain is GDNF family receptor alpha-like, found in Rattus norvegicus (Rat).